The chain runs to 349 residues: Phosphate acyltransferase (349 aa).

Belongs to the PlsX family. Homodimer. Probably interacts with PlsY.

It localises to the cytoplasm. The enzyme catalyses a fatty acyl-[ACP] + phosphate = an acyl phosphate + holo-[ACP]. It participates in lipid metabolism; phospholipid metabolism. In terms of biological role, catalyzes the reversible formation of acyl-phosphate (acyl-PO(4)) from acyl-[acyl-carrier-protein] (acyl-ACP). This enzyme utilizes acyl-ACP as fatty acyl donor, but not acyl-CoA. This is Phosphate acyltransferase from Rhodopseudomonas palustris (strain BisA53).